The primary structure comprises 1405 residues: DNA-directed RNA polymerase subunit beta' (1405 aa).

The Zn(2+) site is built by cysteine 70, cysteine 72, cysteine 85, and cysteine 88. Positions 460, 462, and 464 each coordinate Mg(2+). Positions 815, 890, 897, and 900 each coordinate Zn(2+). The interval 1375 to 1405 (GLTDSEMETLSGKPAGAEPVAALADAGADEE) is disordered.

The protein belongs to the RNA polymerase beta' chain family. The RNAP catalytic core consists of 2 alpha, 1 beta, 1 beta' and 1 omega subunit. When a sigma factor is associated with the core the holoenzyme is formed, which can initiate transcription. Mg(2+) serves as cofactor. Requires Zn(2+) as cofactor.

It carries out the reaction RNA(n) + a ribonucleoside 5'-triphosphate = RNA(n+1) + diphosphate. DNA-dependent RNA polymerase catalyzes the transcription of DNA into RNA using the four ribonucleoside triphosphates as substrates. The chain is DNA-directed RNA polymerase subunit beta' from Xanthomonas oryzae pv. oryzae (strain MAFF 311018).